We begin with the raw amino-acid sequence, 229 residues long: Uracil-DNA glycosylase (229 aa).

The active-site Proton acceptor is aspartate 64.

Belongs to the uracil-DNA glycosylase (UDG) superfamily. UNG family.

The protein resides in the cytoplasm. The catalysed reaction is Hydrolyzes single-stranded DNA or mismatched double-stranded DNA and polynucleotides, releasing free uracil.. In terms of biological role, excises uracil residues from the DNA which can arise as a result of misincorporation of dUMP residues by DNA polymerase or due to deamination of cytosine. In Salmonella choleraesuis (strain SC-B67), this protein is Uracil-DNA glycosylase.